The chain runs to 251 residues: 5'-nucleotidase SurE (251 aa).

A divalent metal cation-binding residues include aspartate 8, aspartate 9, serine 39, and asparagine 95.

The protein belongs to the SurE nucleotidase family. The cofactor is a divalent metal cation.

Its subcellular location is the cytoplasm. It catalyses the reaction a ribonucleoside 5'-phosphate + H2O = a ribonucleoside + phosphate. Nucleotidase that shows phosphatase activity on nucleoside 5'-monophosphates. This Clostridium botulinum (strain Alaska E43 / Type E3) protein is 5'-nucleotidase SurE.